A 396-amino-acid polypeptide reads, in one-letter code: Ornithine aminotransferase (396 aa).

An N6-(pyridoxal phosphate)lysine modification is found at lysine 255.

Belongs to the class-III pyridoxal-phosphate-dependent aminotransferase family. OAT subfamily. Requires pyridoxal 5'-phosphate as cofactor.

The protein localises to the cytoplasm. The enzyme catalyses a 2-oxocarboxylate + L-ornithine = L-glutamate 5-semialdehyde + an L-alpha-amino acid. It participates in amino-acid biosynthesis; L-proline biosynthesis; L-glutamate 5-semialdehyde from L-ornithine: step 1/1. In terms of biological role, catalyzes the interconversion of ornithine to glutamate semialdehyde. The chain is Ornithine aminotransferase from Staphylococcus carnosus (strain TM300).